Here is a 310-residue protein sequence, read N- to C-terminus: HPr kinase/phosphorylase (310 aa).

Catalysis depends on residues H136 and K157. 151-158 (GDSGIGKS) serves as a coordination point for ATP. S158 contacts Mg(2+). Catalysis depends on D175, which acts as the Proton acceptor; for phosphorylation activity. Proton donor; for dephosphorylation activity. Residues 199 to 208 (LEIRGLGIIN) are important for the catalytic mechanism of both phosphorylation and dephosphorylation. Position 200 (E200) interacts with Mg(2+). The active site involves R241. An important for the catalytic mechanism of dephosphorylation region spans residues 262-267 (PVRPGR).

It belongs to the HPrK/P family. Homohexamer. Mg(2+) serves as cofactor.

It carries out the reaction [HPr protein]-L-serine + ATP = [HPr protein]-O-phospho-L-serine + ADP + H(+). The enzyme catalyses [HPr protein]-O-phospho-L-serine + phosphate + H(+) = [HPr protein]-L-serine + diphosphate. Catalyzes the ATP- as well as the pyrophosphate-dependent phosphorylation of a specific serine residue in HPr, a phosphocarrier protein of the phosphoenolpyruvate-dependent sugar phosphotransferase system (PTS). HprK/P also catalyzes the pyrophosphate-producing, inorganic phosphate-dependent dephosphorylation (phosphorolysis) of seryl-phosphorylated HPr (P-Ser-HPr). The two antagonistic activities of HprK/P are regulated by several intracellular metabolites, which change their concentration in response to the absence or presence of rapidly metabolisable carbon sources (glucose, fructose, etc.) in the growth medium. Therefore, by controlling the phosphorylation state of HPr, HPrK/P is a sensor enzyme that plays a major role in the regulation of carbon metabolism and sugar transport: it mediates carbon catabolite repression (CCR), and regulates PTS-catalyzed carbohydrate uptake and inducer exclusion. The sequence is that of HPr kinase/phosphorylase from Staphylococcus aureus (strain Mu3 / ATCC 700698).